The chain runs to 342 residues: MTNILSPEKSEHDQELPIRPSYLKEFVGQQQIKENLLVFIKAAKSRNEHLDHTLFYGPPGLGKTTLAKIISNEIGGNFKSTAGPAIIKAADLASILTNLEKNDVLFIDEIHRLNTLVEEVLYSAMEDFELDIIIGEGSAARPVKITLPKFTLIGATTRFGLISNPLRDRFGIPMRLNFYNTEELKQVLNRASKLLDIDLTDSGSEEIAKRSRGTPRIALRLLRRIRDFAVVDGKSRIDKEICDFGLKRLTVDSIGLDSNDYRYLKFIADNYHGGPVGIETIAAALSEQRDELEETIEPYLIKIGLVKRTPRGRVITIAAFEHLKMPIPNKSQNQLNILNENE.

Residues 1-179 are large ATPase domain (RuvB-L); the sequence is MTNILSPEKS…FGIPMRLNFY (179 aa). ATP contacts are provided by residues isoleucine 18, arginine 19, glycine 60, lysine 63, threonine 64, threonine 65, 126 to 128, arginine 169, tyrosine 179, and arginine 216; that span reads EDF. Residue threonine 64 coordinates Mg(2+). Residues 180–250 form a small ATPAse domain (RuvB-S) region; that stretch reads NTEELKQVLN…ICDFGLKRLT (71 aa). The head domain (RuvB-H) stretch occupies residues 253–342; the sequence is SIGLDSNDYR…NQLNILNENE (90 aa). Residues arginine 289, arginine 308, and arginine 313 each coordinate DNA.

Belongs to the RuvB family. As to quaternary structure, homohexamer. Forms an RuvA(8)-RuvB(12)-Holliday junction (HJ) complex. HJ DNA is sandwiched between 2 RuvA tetramers; dsDNA enters through RuvA and exits via RuvB. An RuvB hexamer assembles on each DNA strand where it exits the tetramer. Each RuvB hexamer is contacted by two RuvA subunits (via domain III) on 2 adjacent RuvB subunits; this complex drives branch migration. In the full resolvosome a probable DNA-RuvA(4)-RuvB(12)-RuvC(2) complex forms which resolves the HJ.

It is found in the cytoplasm. It catalyses the reaction ATP + H2O = ADP + phosphate + H(+). Its function is as follows. Participates in UV-tolerance of Synechocystis PCC 6803. Functionally, the RuvA-RuvB-RuvC complex processes Holliday junction (HJ) DNA during genetic recombination and DNA repair, while the RuvA-RuvB complex plays an important role in the rescue of blocked DNA replication forks via replication fork reversal (RFR). RuvA specifically binds to HJ cruciform DNA, conferring on it an open structure. The RuvB hexamer acts as an ATP-dependent pump, pulling dsDNA into and through the RuvAB complex. RuvB forms 2 homohexamers on either side of HJ DNA bound by 1 or 2 RuvA tetramers; 4 subunits per hexamer contact DNA at a time. Coordinated motions by a converter formed by DNA-disengaged RuvB subunits stimulates ATP hydrolysis and nucleotide exchange. Immobilization of the converter enables RuvB to convert the ATP-contained energy into a lever motion, pulling 2 nucleotides of DNA out of the RuvA tetramer per ATP hydrolyzed, thus driving DNA branch migration. The RuvB motors rotate together with the DNA substrate, which together with the progressing nucleotide cycle form the mechanistic basis for DNA recombination by continuous HJ branch migration. Branch migration allows RuvC to scan DNA until it finds its consensus sequence, where it cleaves and resolves cruciform DNA. The polypeptide is Holliday junction branch migration complex subunit RuvB (Rickettsia prowazekii (strain Madrid E)).